The following is a 402-amino-acid chain: Serine/threonine transporter SstT (402 aa).

The next 9 membrane-spanning stretches (helical) occupy residues 19-39 (IGVV…AIGL), 43-63 (LFVG…VISA), 86-106 (TFAA…TLIL), 138-158 (AITE…GLAM), 179-199 (VVKW…FTSI), 212-232 (LLIL…NPII), 287-307 (IPLG…ILTL), 327-347 (VVAA…LLLI), and 354-374 (FGIS…VGVI).

It belongs to the dicarboxylate/amino acid:cation symporter (DAACS) (TC 2.A.23) family.

The protein localises to the cell membrane. It carries out the reaction L-serine(in) + Na(+)(in) = L-serine(out) + Na(+)(out). It catalyses the reaction L-threonine(in) + Na(+)(in) = L-threonine(out) + Na(+)(out). Involved in the import of serine and threonine into the cell, with the concomitant import of sodium (symport system). The sequence is that of Serine/threonine transporter SstT from Streptococcus agalactiae serotype III (strain NEM316).